Here is a 623-residue protein sequence, read N- to C-terminus: EIN3-binding F-box protein 2 (623 aa).

The region spanning glutamine 52–valine 106 is the F-box domain. LRR repeat units lie at residues glycine 119–glycine 147, glutamate 151–asparagine 176, leucine 177–arginine 202, cysteine 203–serine 228, cysteine 229–serine 254, cysteine 255–methionine 281, leucine 307–serine 334, cysteine 335–lysine 360, cysteine 361–glutamate 386, cysteine 387–asparagine 413, cysteine 414–cysteine 441, cysteine 442–glycine 467, leucine 468–glutamate 494, cysteine 495–glycine 521, cysteine 522–asparagine 547, threonine 548–glycine 574, cysteine 575–arginine 600, and cysteine 601–tyrosine 623.

As to quaternary structure, part of a SCF (SKP1-cullin-F-box) protein ligase complex. Interacts with CUL1, SKP1A/ASK1, SKP1B/ASK2, EIN3, and EIL1. Ubiquitous.

It is found in the nucleus. The protein operates within protein modification; protein ubiquitination. Its function is as follows. Component of SCF(EBF1) E3 ubiquitin ligase complexes, which may mediate the ubiquitination and subsequent proteasomal degradation of target proteins (probably including EIN3 and EIL1). Regulator of the ethylene signaling cascade by modulating the stability of EIN3 and EIL1 proteins. This is EIN3-binding F-box protein 2 (EBF2) from Arabidopsis thaliana (Mouse-ear cress).